The sequence spans 129 residues: Large ribosomal subunit protein bL17 (129 aa).

This sequence belongs to the bacterial ribosomal protein bL17 family. As to quaternary structure, part of the 50S ribosomal subunit. Contacts protein L32.

The chain is Large ribosomal subunit protein bL17 from Yersinia enterocolitica serotype O:8 / biotype 1B (strain NCTC 13174 / 8081).